The chain runs to 63 residues: Venom peptide 2a (63 aa).

Residues 1-22 form the signal peptide; sequence MRGTSFILFAVVVILGFLNANA. AXPX repeat units follow at residues 22 to 25, 26 to 29, 32 to 35, 38 to 41, and 44 to 47; these read AEPL, ANPA, ANPD, and ANPE. The propeptide occupies 23–48; that stretch reads EPLANPAPLANPDPLANPDPLANPEA. Leucine amide is present on Leu62.

As to expression, expressed by the venom gland.

The protein resides in the secreted. It is found in the target cell membrane. Antimicrobial peptide. Shows activities against Gram-positive bacteria (S.aureus MIC=50 uM and 200 ug/ml, and B.subtilis MIC=200 ug/ml), Gram-negative bacterium E.coli (MIC=100 uM and 200 ug/ml) and fungi (B.cinerea MIC=5 uM, S.cerevisiae MIC=128 ug/ml, S.pombe MIC=128 ug/ml, A.nidulans MIC=128 ug/ml, and C.albicans MIC=64-100 uM). Shows cytolytic activity against insect cell lines. Its hemolytic activity is controversial, as Baek and colleagues report no activity while Bea and colleagues note a hemolytic activity. In vivo, peptide injection in the vicinity of the head and thorax of lepidopteran larvae induces feeding disorder followed by death due to starvation. Is weakly lethal when tested on water flies (D.magna), but is not lethal on lady beetles (H.convergens). The chain is Venom peptide 2a from Eumenes pomiformis (Potter wasp).